Consider the following 525-residue polypeptide: Ribosomal protein S6 kinase beta-1 (525 aa).

The short motif at Phe-28–Leu-32 is the TOS motif element. The tract at residues Phe-28–Met-54 is disordered. Residues Ile-30–Glu-46 show a composition bias toward acidic residues. Residues Phe-91–Phe-352 form the Protein kinase domain. ATP-binding positions include Leu-97–Val-105 and Lys-123. The active-site Proton acceptor is the Asp-218. A Phosphothreonine; by PDPK1 modification is found at Thr-252. The region spanning Arg-353–Lys-423 is the AGC-kinase C-terminal domain. A disordered region spans residues Ser-380–Thr-399. Residues Gln-381–Thr-399 are compositionally biased toward polar residues. The residue at position 394 (Ser-394) is a Phosphoserine. Thr-412 is modified (phosphothreonine; by MTOR, NEK6 and NEK7). Residues Glu-424–Leu-525 form an autoinhibitory domain region. Ser-434 and Ser-441 each carry phosphoserine. Thr-444 bears the Phosphothreonine mark. Phosphoserine is present on residues Ser-447 and Ser-452. Residues Val-486–Gln-509 form a disordered region. An N6-acetyllysine modification is found at Lys-516.

It belongs to the protein kinase superfamily. AGC Ser/Thr protein kinase family. S6 kinase subfamily. As to quaternary structure, interacts with PPP1R9A/neurabin-1. Interacts with RPTOR. Interacts with IRS1. Interacts with EIF3B and EIF3C. Interacts with POLDIP3. Interacts with TRAF4. Interacts (via N-terminus) with IER5. Dephosphorylation by PPP1CC at Thr-412 in mitochondrion. Phosphorylation at Thr-412 is regulated by mTORC1. The phosphorylation at this site is maintained by an agonist-dependent autophosphorylation mechanism. Activated by phosphorylation at Thr-252 by PDPK1. In terms of tissue distribution, brain.

It is found in the cytoplasm. The protein localises to the synapse. It localises to the synaptosome. The protein resides in the mitochondrion outer membrane. Its subcellular location is the mitochondrion. The catalysed reaction is L-seryl-[protein] + ATP = O-phospho-L-seryl-[protein] + ADP + H(+). It catalyses the reaction L-threonyl-[protein] + ATP = O-phospho-L-threonyl-[protein] + ADP + H(+). With respect to regulation, activation requires multiple phosphorylation events on serine/threonine residues. Activation appears to be first mediated by phosphorylation of multiple sites in the autoinhibitory domain, which facilitates phosphorylation at Thr-412, disrupting the autoinhibitory mechanism and allowing phosphorylation of Thr-252 by PDPK1. The active conformation of the kinase is believed to be stabilized by a mechanism involving three conserved phosphorylation sites located in the kinase domain activation loop (Thr-252) and in the AGC-kinase C-terminal domain (Ser-394 in the middle of the tail/linker region and Thr-412 within a hydrophobic motif at its end). Activated by mTORC1; isoform Alpha I and isoform Alpha II are sensitive to rapamycin, which inhibits activating phosphorylation at Thr-412. Activated by PDPK1. Functionally, serine/threonine-protein kinase that acts downstream of mTOR signaling in response to growth factors and nutrients to promote cell proliferation, cell growth and cell cycle progression. Regulates protein synthesis through phosphorylation of EIF4B, RPS6 and EEF2K, and contributes to cell survival by repressing the pro-apoptotic function of BAD. Under conditions of nutrient depletion, the inactive form associates with the EIF3 translation initiation complex. Upon mitogenic stimulation, phosphorylation by the mechanistic target of rapamycin complex 1 (mTORC1) leads to dissociation from the EIF3 complex and activation. The active form then phosphorylates and activates several substrates in the pre-initiation complex, including the EIF2B complex and the cap-binding complex component EIF4B. Also controls translation initiation by phosphorylating a negative regulator of EIF4A, PDCD4, targeting it for ubiquitination and subsequent proteolysis. Promotes initiation of the pioneer round of protein synthesis by phosphorylating POLDIP3/SKAR. In response to IGF1, activates translation elongation by phosphorylating EEF2 kinase (EEF2K), which leads to its inhibition and thus activation of EEF2. Also plays a role in feedback regulation of mTORC2 by mTORC1 by phosphorylating MAPKAP1/SIN1, MTOR and RICTOR, resulting in the inhibition of mTORC2 and AKT1 signaling. Also involved in feedback regulation of mTORC1 and mTORC2 by phosphorylating DEPTOR. Mediates cell survival by phosphorylating the pro-apoptotic protein BAD and suppressing its pro-apoptotic function. Phosphorylates mitochondrial URI1 leading to dissociation of a URI1-PPP1CC complex. The free mitochondrial PPP1CC can then dephosphorylate RPS6KB1 at Thr-412, which is proposed to be a negative feedback mechanism for the RPS6KB1 anti-apoptotic function. Mediates TNF-alpha-induced insulin resistance by phosphorylating IRS1 at multiple serine residues, resulting in accelerated degradation of IRS1. In cells lacking functional TSC1-2 complex, constitutively phosphorylates and inhibits GSK3B. May be involved in cytoskeletal rearrangement through binding to neurabin. Phosphorylates and activates the pyrimidine biosynthesis enzyme CAD, downstream of MTOR. Following activation by mTORC1, phosphorylates EPRS and thereby plays a key role in fatty acid uptake by adipocytes and also most probably in interferon-gamma-induced translation inhibition. In Rattus norvegicus (Rat), this protein is Ribosomal protein S6 kinase beta-1 (Rps6kb1).